We begin with the raw amino-acid sequence, 317 residues long: Ornithine carbamoyltransferase (317 aa).

Carbamoyl phosphate contacts are provided by residues 57-60, Gln84, Arg108, and 135-138; these read STRT and HPCQ. Residues Asn166, Asp230, and 234 to 235 each bind L-ornithine; that span reads SM. Carbamoyl phosphate contacts are provided by residues 270–271 and Arg298; that span reads CL.

This sequence belongs to the aspartate/ornithine carbamoyltransferase superfamily. OTCase family. As to quaternary structure, homododecamer.

Its subcellular location is the cytoplasm. The enzyme catalyses carbamoyl phosphate + L-ornithine = L-citrulline + phosphate + H(+). It functions in the pathway amino-acid biosynthesis; L-arginine biosynthesis; L-arginine from L-ornithine and carbamoyl phosphate: step 1/3. Its function is as follows. Reversibly catalyzes the transfer of the carbamoyl group from carbamoyl phosphate (CP) to the N(epsilon) atom of ornithine (ORN) to produce L-citrulline. In Pyrococcus abyssi (strain GE5 / Orsay), this protein is Ornithine carbamoyltransferase.